A 661-amino-acid chain; its full sequence is Methyl-accepting chemotaxis protein McpA (661 aa).

The Cytoplasmic segment spans residues 1-16 (MKKILQLIKQRSITRK). Residues 17-37 (LLVSFLSILIIPVVILAIFAY) traverse the membrane as a helical segment. Topologically, residues 38-281 (QSASSSLDRQ…IHEAAQPVLH (244 aa)) are extracellular. One can recognise a Cache domain in the interval 152 to 228 (ITDPYKTAST…QSGTELKGDW (77 aa)). Residues 282–302 (LALIVLAAAIIIGIIVMTLII) traverse the membrane as a helical segment. One can recognise an HAMP domain in the interval 303–355 (RSITTPLKQLVGSSKRISEGDLTETIDIRSKDELGELGKSFNNMASSLRSLIH). The Cytoplasmic portion of the chain corresponds to 303–661 (RSITTPLKQL…RDMTKRFKIE (359 aa)). At Glu370 the chain carries Glutamate methyl ester (Glu). One can recognise a Methyl-accepting transducer domain in the interval 374–610 (SAAQTSKATE…EVSGASEHIA (237 aa)). Residues Gln593 and Gln594 each carry the deamidated glutamine modification. Gln594 is modified (glutamate methyl ester (Gln)). Residues Glu629 and Glu636 each carry the glutamate methyl ester (Glu) modification.

It belongs to the methyl-accepting chemotaxis (MCP) protein family. In terms of assembly, interacts with FloT. In terms of processing, deamidated by CheD on Gln-593 and Gln-594, producing glutamate residues. The glutamate residues are then methylated. Other additional sites are deamidated and methylated as well.

The protein localises to the cell membrane. The protein resides in the membrane raft. In terms of biological role, chemotactic-signal transducers respond to changes in the concentration of attractants and repellents in the environment, transduce a signal from the outside to the inside of the cell, and facilitate sensory adaptation through the variation of the level of methylation. All amino acids serve as attractants in B.subtilis, they appear to cause an increase in the turnover methyl groups, leading to methylation of an unidentified acceptor, while repellents have been shown to cause a decrease in methyl group turnover. The methyl groups are added by a methyltransferase and removed by a methylesterase. McpA is required for taxis towards glucose and alpha-methylglucoside. This chain is Methyl-accepting chemotaxis protein McpA (mcpA), found in Bacillus subtilis (strain 168).